Consider the following 303-residue polypeptide: N-acetyl-D-glucosamine kinase (303 aa).

ATP-binding positions include G4–K11 and G133–F140. Residues H157, C177, C179, and C184 each coordinate Zn(2+).

Belongs to the ROK (NagC/XylR) family. NagK subfamily.

The catalysed reaction is N-acetyl-D-glucosamine + ATP = N-acetyl-D-glucosamine 6-phosphate + ADP + H(+). The protein operates within cell wall biogenesis; peptidoglycan recycling. Its function is as follows. Catalyzes the phosphorylation of N-acetyl-D-glucosamine (GlcNAc) derived from cell-wall degradation, yielding GlcNAc-6-P. The chain is N-acetyl-D-glucosamine kinase from Shigella boydii serotype 4 (strain Sb227).